A 294-amino-acid chain; its full sequence is 4-hydroxy-tetrahydrodipicolinate synthase (294 aa).

Threonine 44 is a binding site for pyruvate. The active-site Proton donor/acceptor is tyrosine 132. Lysine 160 functions as the Schiff-base intermediate with substrate in the catalytic mechanism. Valine 202 is a binding site for pyruvate.

Belongs to the DapA family. As to quaternary structure, homotetramer; dimer of dimers.

It localises to the cytoplasm. It carries out the reaction L-aspartate 4-semialdehyde + pyruvate = (2S,4S)-4-hydroxy-2,3,4,5-tetrahydrodipicolinate + H2O + H(+). The protein operates within amino-acid biosynthesis; L-lysine biosynthesis via DAP pathway; (S)-tetrahydrodipicolinate from L-aspartate: step 3/4. Its function is as follows. Catalyzes the condensation of (S)-aspartate-beta-semialdehyde [(S)-ASA] and pyruvate to 4-hydroxy-tetrahydrodipicolinate (HTPA). This Leptospira biflexa serovar Patoc (strain Patoc 1 / Ames) protein is 4-hydroxy-tetrahydrodipicolinate synthase.